A 409-amino-acid polypeptide reads, in one-letter code: Sprouty-related, EVH1 domain-containing protein 2 (409 aa).

Positions 5 to 121 constitute a WH1 domain; sequence APPEDDSYIV…RGVRKAIEDL (117 aa). Residues 121-170 are disordered; it reads LTEGSTTSSSTIHNEAELGDDDVFATSTDSSSNSSQKREPPVRTIASPLP. The span at 123 to 133 shows a compositional bias: polar residues; that stretch reads EGSTTSSSTIH. The segment covering 146–155 has biased composition (low complexity); the sequence is TSTDSSSNSS. A KBD domain is found at 199–253; sequence PHRHVSFPDDDDEIVRINPRERNWLTGYEDYRQAPIHRKYPDTESIDSYVRFAKS. The 109-residue stretch at 299–407 folds into the SPR domain; sequence RCIYCRDMFN…CGCCGGKHKA (109 aa).

Its subcellular location is the cell membrane. It localises to the cytoplasmic vesicle. The protein resides in the secretory vesicle membrane. The protein localises to the cytoplasm. In terms of biological role, negatively regulates Ras signaling pathways and downstream activation of MAP kinases. This chain is Sprouty-related, EVH1 domain-containing protein 2 (spred2), found in Xenopus tropicalis (Western clawed frog).